The chain runs to 213 residues: Lactobacillus shifted protein (213 aa).

A compositionally biased stretch (polar residues) spans 28 to 38 (PRFTENAMQPN). Disordered stretches follow at residues 28–56 (PRFTENAMQPNDPTPRPAKPNVSETDATP) and 182–213 (PTSSYPLEPTGAAEEVNENQRVTEGATGYEQR).

This chain is Lactobacillus shifted protein (lbsA), found in Emericella nidulans (strain FGSC A4 / ATCC 38163 / CBS 112.46 / NRRL 194 / M139) (Aspergillus nidulans).